The sequence spans 85 residues: Small ribosomal subunit protein bS16c (85 aa).

Belongs to the bacterial ribosomal protein bS16 family.

It is found in the plastid. Its subcellular location is the chloroplast. The protein is Small ribosomal subunit protein bS16c of Agrostis stolonifera (Creeping bentgrass).